Reading from the N-terminus, the 360-residue chain is Photosystem II protein D1 1 (360 aa).

The next 3 helical transmembrane spans lie at 29–46 (YVGW…TATT), 118–133 (HFLI…EWEL), and 142–156 (WICV…AATA). Histidine 118 is a chlorophyll a binding site. Tyrosine 126 lines the pheophytin a pocket. Aspartate 170 and glutamate 189 together coordinate [CaMn4O5] cluster. Residues 197–218 (FHMLGVAGVFGGSLFSAMHGSL) form a helical membrane-spanning segment. Histidine 198 is a chlorophyll a binding site. A quinone is bound by residues histidine 215 and 264-265 (SF). Histidine 215 lines the Fe cation pocket. Histidine 272 contacts Fe cation. The helical transmembrane segment at 274–288 (FLGAWPVVGIWFTAL) threads the bilayer. Positions 332, 333, 342, and 344 each coordinate [CaMn4O5] cluster. Residues 345 to 360 (AGEQAPVALQAPAING) constitute a propeptide that is removed on maturation.

Belongs to the reaction center PufL/M/PsbA/D family. PSII is composed of 1 copy each of membrane proteins PsbA, PsbB, PsbC, PsbD, PsbE, PsbF, PsbH, PsbI, PsbJ, PsbK, PsbL, PsbM, PsbT, PsbX, PsbY, PsbZ, Psb30/Ycf12, peripheral proteins PsbO, CyanoQ (PsbQ), PsbU, PsbV and a large number of cofactors. It forms dimeric complexes. The cofactor is The D1/D2 heterodimer binds P680, chlorophylls that are the primary electron donor of PSII, and subsequent electron acceptors. It shares a non-heme iron and each subunit binds pheophytin, quinone, additional chlorophylls, carotenoids and lipids. D1 provides most of the ligands for the Mn4-Ca-O5 cluster of the oxygen-evolving complex (OEC). There is also a Cl(-1) ion associated with D1 and D2, which is required for oxygen evolution. The PSII complex binds additional chlorophylls, carotenoids and specific lipids.. Tyr-161 forms a radical intermediate that is referred to as redox-active TyrZ, YZ or Y-Z. In terms of processing, C-terminally processed by CtpA; processing is essential to allow assembly of the oxygen-evolving complex and thus photosynthetic growth.

The protein resides in the cellular thylakoid membrane. The enzyme catalyses 2 a plastoquinone + 4 hnu + 2 H2O = 2 a plastoquinol + O2. Functionally, photosystem II (PSII) is a light-driven water:plastoquinone oxidoreductase that uses light energy to abstract electrons from H(2)O, generating O(2) and a proton gradient subsequently used for ATP formation. It consists of a core antenna complex that captures photons, and an electron transfer chain that converts photonic excitation into a charge separation. The D1/D2 (PsbA/PsbD) reaction center heterodimer binds P680, the primary electron donor of PSII as well as several subsequent electron acceptors. This Picosynechococcus sp. (strain ATCC 27264 / PCC 7002 / PR-6) (Agmenellum quadruplicatum) protein is Photosystem II protein D1 1.